Reading from the N-terminus, the 303-residue chain is N-acetylmuramic acid 6-phosphate etherase (303 aa).

The 164-residue stretch at Ala-60–Lys-223 folds into the SIS domain. Glu-88 acts as the Proton donor in catalysis. Glu-119 is a catalytic residue.

It belongs to the GCKR-like family. MurNAc-6-P etherase subfamily. In terms of assembly, homodimer.

The catalysed reaction is N-acetyl-D-muramate 6-phosphate + H2O = N-acetyl-D-glucosamine 6-phosphate + (R)-lactate. It participates in amino-sugar metabolism; 1,6-anhydro-N-acetylmuramate degradation. Its pathway is amino-sugar metabolism; N-acetylmuramate degradation. It functions in the pathway cell wall biogenesis; peptidoglycan recycling. Specifically catalyzes the cleavage of the D-lactyl ether substituent of MurNAc 6-phosphate, producing GlcNAc 6-phosphate and D-lactate. Together with AnmK, is also required for the utilization of anhydro-N-acetylmuramic acid (anhMurNAc) either imported from the medium or derived from its own cell wall murein, and thus plays a role in cell wall recycling. This chain is N-acetylmuramic acid 6-phosphate etherase, found in Pectobacterium atrosepticum (strain SCRI 1043 / ATCC BAA-672) (Erwinia carotovora subsp. atroseptica).